The chain runs to 25 residues: Antithrombin-III (25 aa).

It belongs to the serpin family. As to quaternary structure, forms protease inhibiting heterodimer with TMPRSS7. Phosphorylated by FAM20C in the extracellular medium. As to expression, plasma.

It localises to the secreted. The protein resides in the extracellular space. Functionally, most important serine protease inhibitor in plasma that regulates the blood coagulation cascade. AT-III inhibits thrombin, matriptase-3/TMPRSS7, as well as factors IXa, Xa and XIa. Its inhibitory activity is greatly enhanced in the presence of heparin. The sequence is that of Antithrombin-III (SERPINC1) from Mesocricetus auratus (Golden hamster).